An 85-amino-acid polypeptide reads, in one-letter code: Beta-insect depressant toxin Lqh-dprIT3h (85 aa).

An N-terminal signal peptide occupies residues 1 to 21 (MKLLLLLTISASMLIEGLVNA). Residues 22–82 (DGYIRGGDGC…EWDYETDTCG (61 aa)) enclose the LCN-type CS-alpha/beta domain. 4 disulfide bridges follow: Cys31–Cys81, Cys35–Cys56, Cys42–Cys63, and Cys46–Cys65. Position 82 is a glycine amide (Gly82).

It belongs to the long (4 C-C) scorpion toxin superfamily. Sodium channel inhibitor family. Beta subfamily. As to expression, expressed by the venom gland.

It localises to the secreted. Functionally, depressant insect beta-toxins cause a transient contraction paralysis followed by a slow flaccid paralysis. They bind voltage-independently at site-4 of sodium channels (Nav) and block action potentials, primarily by depolarizing the axonal membrane and suppressing the sodium current. This depressant toxin is active only on insects. It is found in a relatively small amount in the venom. This chain is Beta-insect depressant toxin Lqh-dprIT3h, found in Leiurus hebraeus (Hebrew deathstalker scorpion).